Consider the following 79-residue polypeptide: Cytochrome c oxidase subunit 7A1, mitochondrial (79 aa).

The transit peptide at 1–21 (MQALRVSRALIRSFNTTARNR) directs the protein to the mitochondrion. Topologically, residues 22-46 (FQNRVPEKQKLFQEDNDIPLYLKGG) are mitochondrial matrix. The chain crosses the membrane as a helical span at residues 47 to 75 (IVDNILYRVTMGLCLGGSAYSMYCLGWAS). At 76–79 (FPRN) the chain is on the mitochondrial intermembrane side.

This sequence belongs to the cytochrome c oxidase VIIa family. In terms of assembly, component of the complex IV (CIV, cytochrome c oxidase), a multisubunit enzyme composed of 14 subunits. The complex is composed of a catalytic core of 3 subunits MT-CO1, MT-CO2 and MT-CO3, encoded in the mitochondrial DNA, and 11 supernumerary subunits COX4I1 (or COX4I2), COX5A, COX5B, COX6A2 (or COX6A1), COX6B1 (or COX6B2), COX6C, COX7A1 (or COX7A2), COX7B, COX7C, COX8B and NDUFA4, which are encoded in the nuclear genome. The complex exists as a monomer or a dimer and forms supercomplexes (SCs) in the inner mitochondrial membrane with NADH-ubiquinone oxidoreductase (complex I, CI) and ubiquinol-cytochrome c oxidoreductase (cytochrome b-c1 complex, complex III, CIII), resulting in different assemblies (supercomplex SCI(1)III(2)IV(1) and megacomplex MCI(2)III(2)IV(2)).

The protein localises to the mitochondrion inner membrane. The protein operates within energy metabolism; oxidative phosphorylation. Component of the mitochondrial respiratory complex IV (CIV, also named cytochrome c oxidase complex), the last enzyme in the mitochondrial electron transport chain which drives oxidative phosphorylation. The CIV complex is the component of the respiratory chain that catalyzes the reduction of oxygen to water. Acts as an assembly factor that specifically drives the homodimerization of CIV complexes, mediating the formation of mitochondrial respiratory supercomplexes (respirasomes) containing two CIV: supercomplxes with two molecules of CIV show improved activity. Despite being highly expressed in brown adipose tissue, not required for thermogenesis. In Trachypithecus cristatus (Silvered leaf-monkey), this protein is Cytochrome c oxidase subunit 7A1, mitochondrial (COX7A1).